Reading from the N-terminus, the 668-residue chain is Penicillin-binding protein 3 (668 aa).

The helical transmembrane segment at 7 to 23 (LLVFLCVGLIGLIGCSK) threads the bilayer. The active-site Acyl-ester intermediate is the Ser410.

Belongs to the transpeptidase family.

The protein resides in the cell membrane. It localises to the forespore inner membrane. The protein localises to the forespore outer membrane. Its subcellular location is the membrane raft. The enzyme catalyses Preferential cleavage: (Ac)2-L-Lys-D-Ala-|-D-Ala. Also transpeptidation of peptidyl-alanyl moieties that are N-acyl substituents of D-alanine.. Its pathway is cell wall biogenesis; peptidoglycan biosynthesis. In terms of biological role, penicillin-binding proteins (PBPs) function in the late steps of murein biosynthesis. Probably required for both cortical and vegetative peptidoglycan synthesis. Although not usually required for cell division, in the absence of PBP 2B (pbpB) it becomes essential. Confers resistance to oxacillin and cephalexin. The protein is Penicillin-binding protein 3 of Bacillus subtilis (strain 168).